The primary structure comprises 561 residues: Acyl-CoA ligase ppsA (561 aa).

An N-linked (GlcNAc...) asparagine glycan is attached at Asn-21. The chain crosses the membrane as a helical span at residues Ser-71 to Ala-91. Met-203–Lys-214 is an AMP binding site. Residue Asn-396 is glycosylated (N-linked (GlcNAc...) asparagine). The interval Glu-462 to Lys-540 is AMP-binding.

The protein belongs to the ATP-dependent AMP-binding enzyme family.

The protein localises to the membrane. It carries out the reaction acetate + ATP + CoA = acetyl-CoA + ADP + phosphate. The enzyme catalyses propanoate + ATP + CoA = propanoyl-CoA + AMP + diphosphate. Its pathway is secondary metabolite biosynthesis. In terms of biological role, acyl-CoA ligase; part of the gene cluster that mediates the biosynthesis of 2,4'-dihydroxy-3'-methoxypropiophenone. The first step of the pathway is the conversion of acetate into acetyl-CoA by the acyl-CoA ligase ppsA. Acetyl-CoA is then used as a starter unit by the polyketide synthase ppsB and condensed with 4 malonyl-CoA unit to produce the pentaketide backbone. During polyketide extension, the polykedite chain is probably reduced and dehydrated by the KR and PT domains, respectively. O-methylation seems to be catalyzed by an unknown methyltransferase rather than by the CMeT domain of ppsB. Two hydroxylations and one further decarboxylation step catalyzed by yet unknown enzymes are then required to yield 4'-hydroxy-3'-methoxypropiophenone. PpsC functions as a carrier protein to transport 4'-hydroxy-3'-methoxypropiophenone to a specific cell compartment in which 4'-hydroxy-3'-methoxypropiophenone is hydroxylated to 2,4'-dihydroxy-3'-methoxypropiophenone by a still to be identified enzyme. The sequence is that of Acyl-CoA ligase ppsA from Aspergillus oryzae (strain ATCC 42149 / RIB 40) (Yellow koji mold).